We begin with the raw amino-acid sequence, 430 residues long: Putative glycylpeptide N-tetradecanoyltransferase 2 (430 aa).

Tetradecanoyl-CoA contacts are provided by residues 47-50 (HKFW), 181-183 (LCV), and 189-193 (SKGLA). Leucine 430 serves as the catalytic Proton acceptor; via carboxylate.

The protein belongs to the NMT family.

The enzyme catalyses N-terminal glycyl-[protein] + tetradecanoyl-CoA = N-tetradecanoylglycyl-[protein] + CoA + H(+). Its function is as follows. May add a myristoyl group to the N-terminal glycine residue of certain cellular proteins. This chain is Putative glycylpeptide N-tetradecanoyltransferase 2 (NMT2), found in Arabidopsis thaliana (Mouse-ear cress).